Reading from the N-terminus, the 446-residue chain is AP-2 complex subunit mu (446 aa).

Residues serine 145, serine 151, and serine 152 each carry the phosphoserine modification. Threonine 157 is subject to Phosphothreonine. An MHD domain is found at 177–445 (KNSIYIDIVE…STRAGTCEIR (269 aa)).

Belongs to the adaptor complexes medium subunit family. As to quaternary structure, adaptor protein complex 2 (AP-2) is a heterotetramer composed of two large adaptins (alpha-type subunit apl3 and beta-type subunit apl1), a medium chain (mu-type subunit apm4) and a small adaptin (sigma-type subunit aps2).

The protein localises to the cell membrane. It localises to the membrane. Its subcellular location is the coated pit. In terms of biological role, component of the adaptor complexes which link clathrin to receptors in coated vesicles. Clathrin-associated protein complexes are believed to interact with the cytoplasmic tails of membrane proteins, leading to their selection and concentration. AP50 is a subunit of the plasma membrane adaptor (Potential). This chain is AP-2 complex subunit mu (apm4), found in Schizosaccharomyces pombe (strain 972 / ATCC 24843) (Fission yeast).